The following is a 299-amino-acid chain: tRNA dimethylallyltransferase (299 aa).

10–17 is a binding site for ATP; sequence GPTAVGKT. Residue 12-17 coordinates substrate; sequence TAVGKT. Positions 35 to 38 are interaction with substrate tRNA; it reads DSQQ.

Belongs to the IPP transferase family. Monomer. Mg(2+) serves as cofactor.

The catalysed reaction is adenosine(37) in tRNA + dimethylallyl diphosphate = N(6)-dimethylallyladenosine(37) in tRNA + diphosphate. Functionally, catalyzes the transfer of a dimethylallyl group onto the adenine at position 37 in tRNAs that read codons beginning with uridine, leading to the formation of N6-(dimethylallyl)adenosine (i(6)A). The protein is tRNA dimethylallyltransferase of Streptococcus thermophilus (strain ATCC BAA-250 / LMG 18311).